Reading from the N-terminus, the 226-residue chain is MTKTIKTVSFAAAAILVVIICTFLIIRQTHENVLSKETVVKKVEASYEGKVTKATQSKDKKTYDITLENPKGTYFVKADAISADILSMNRVKAVNPSAMTEKEAEHLALERVPGTVKKQTRQSQVATYTIQKEDGKTYEVKVDMQAKTVLSADQISSKDQQKTPITKKEAKTIAERKTGGTADDADLEESEGTLIFEVDVDLPDNKEATVKINAYTGKVANIVYED.

The chain crosses the membrane as a helical span at residues 5-25 (IKTVSFAAAAILVVIICTFLI).

The protein localises to the cell membrane. This is an uncharacterized protein from Bacillus subtilis (strain 168).